A 417-amino-acid chain; its full sequence is Tryptophan synthase beta chain (417 aa).

Residue Lys110 is modified to N6-(pyridoxal phosphate)lysine.

It belongs to the TrpB family. Tetramer of two alpha and two beta chains. It depends on pyridoxal 5'-phosphate as a cofactor.

It catalyses the reaction (1S,2R)-1-C-(indol-3-yl)glycerol 3-phosphate + L-serine = D-glyceraldehyde 3-phosphate + L-tryptophan + H2O. The protein operates within amino-acid biosynthesis; L-tryptophan biosynthesis; L-tryptophan from chorismate: step 5/5. Its function is as follows. The beta subunit is responsible for the synthesis of L-tryptophan from indole and L-serine. The polypeptide is Tryptophan synthase beta chain (Prochlorococcus marinus (strain NATL1A)).